The primary structure comprises 156 residues: Small ribosomal subunit protein uS7 (156 aa).

The protein belongs to the universal ribosomal protein uS7 family. As to quaternary structure, part of the 30S ribosomal subunit. Contacts proteins S9 and S11.

Its function is as follows. One of the primary rRNA binding proteins, it binds directly to 16S rRNA where it nucleates assembly of the head domain of the 30S subunit. Is located at the subunit interface close to the decoding center, probably blocks exit of the E-site tRNA. The polypeptide is Small ribosomal subunit protein uS7 (Proteus mirabilis (strain HI4320)).